A 159-amino-acid chain; its full sequence is ATP synthase subunit b (159 aa).

The helical transmembrane segment at 7 to 27 (DFIWTLINFFVLLFILKILLY) threads the bilayer.

The protein belongs to the ATPase B chain family. F-type ATPases have 2 components, F(1) - the catalytic core - and F(0) - the membrane proton channel. F(1) has five subunits: alpha(3), beta(3), gamma(1), delta(1), epsilon(1). F(0) has three main subunits: a(1), b(2) and c(10-14). The alpha and beta chains form an alternating ring which encloses part of the gamma chain. F(1) is attached to F(0) by a central stalk formed by the gamma and epsilon chains, while a peripheral stalk is formed by the delta and b chains.

It localises to the cell membrane. Its function is as follows. F(1)F(0) ATP synthase produces ATP from ADP in the presence of a proton or sodium gradient. F-type ATPases consist of two structural domains, F(1) containing the extramembraneous catalytic core and F(0) containing the membrane proton channel, linked together by a central stalk and a peripheral stalk. During catalysis, ATP synthesis in the catalytic domain of F(1) is coupled via a rotary mechanism of the central stalk subunits to proton translocation. Component of the F(0) channel, it forms part of the peripheral stalk, linking F(1) to F(0). The polypeptide is ATP synthase subunit b (Carboxydothermus hydrogenoformans (strain ATCC BAA-161 / DSM 6008 / Z-2901)).